The primary structure comprises 60 residues: Large ribosomal subunit protein bL32 (60 aa).

This sequence belongs to the bacterial ribosomal protein bL32 family.

The sequence is that of Large ribosomal subunit protein bL32 from Oenococcus oeni (strain ATCC BAA-331 / PSU-1).